A 1249-amino-acid polypeptide reads, in one-letter code: Clustered mitochondria protein homolog (1249 aa).

The segment at 1 to 34 is disordered; that stretch reads MAQTNGELEHSKAETPEQLTNGNHPEETQEEEQN. The Clu domain maps to 321 to 565; it reads DITRSQENYL…RVTPLDVMWQ (245 aa). Disordered stretches follow at residues 610 to 638 and 874 to 907; these read VETASKEKSEENAESKEEGSEEKSEEALD and VPATNGASQEEGKKKKKKGGDSKSPARAASPEKP. The span at 613 to 638 shows a compositional bias: basic and acidic residues; that stretch reads ASKEKSEENAESKEEGSEEKSEEALD. TPR repeat units follow at residues 975 to 1008, 1017 to 1050, and 1059 to 1092; these read AKLYHQLSMLYYQTDEKEAAVELARKAVIVTERT, ILSYLNLSLFEHASGNTKTALVYIKHAMDLWKII, and ITTMNNAAVMLQHLKQYSDSRKWFEASLTVCESL. Residues 1178-1191 show a composition bias toward polar residues; it reads TRTLGTKVQPQVGQ. The tract at residues 1178-1249 is disordered; it reads TRTLGTKVQP…KLRGSKKSSA (72 aa). Positions 1192–1205 are enriched in low complexity; that stretch reads SAPSASGASSANPS.

The protein belongs to the CLU family. As to quaternary structure, may associate with the eukaryotic translation initiation factor 3 (eIF-3) complex.

It is found in the cytoplasm. Its function is as follows. mRNA-binding protein involved in proper cytoplasmic distribution of mitochondria. The sequence is that of Clustered mitochondria protein homolog from Aspergillus oryzae (strain ATCC 42149 / RIB 40) (Yellow koji mold).